The chain runs to 139 residues: Putative pre-16S rRNA nuclease (139 aa).

The protein belongs to the YqgF nuclease family.

Its subcellular location is the cytoplasm. In terms of biological role, could be a nuclease involved in processing of the 5'-end of pre-16S rRNA. The chain is Putative pre-16S rRNA nuclease from Rubrobacter xylanophilus (strain DSM 9941 / JCM 11954 / NBRC 16129 / PRD-1).